Consider the following 329-residue polypeptide: PTS-dependent dihydroxyacetone kinase 1, dihydroxyacetone-binding subunit DhaK (329 aa).

The 323-residue stretch at 7–329 folds into the DhaK domain; it reads GTDQVVEQMV…LKLPVDTIAW (323 aa). Dihydroxyacetone contacts are provided by residues 53-56, Lys104, and Asp109; that span reads GSGH. His56 (proton acceptor) is an active-site residue. His218 (tele-hemiaminal-histidine intermediate) is an active-site residue.

In terms of assembly, homodimer. The dihydroxyacetone kinase complex is composed of a homodimer of DhaM, a homodimer of DhaK and the subunit DhaL.

The protein localises to the cytoplasm. It catalyses the reaction dihydroxyacetone + phosphoenolpyruvate = dihydroxyacetone phosphate + pyruvate. Its pathway is polyol metabolism; glycerol degradation. In terms of biological role, dihydroxyacetone binding subunit of the dihydroxyacetone kinase, which is responsible for the phosphoenolpyruvate (PEP)-dependent phosphorylation of dihydroxyacetone via a phosphoryl group transfer from DhaL-ATP. The protein is PTS-dependent dihydroxyacetone kinase 1, dihydroxyacetone-binding subunit DhaK of Listeria innocua serovar 6a (strain ATCC BAA-680 / CLIP 11262).